The chain runs to 913 residues: Clumping factor B (913 aa).

The signal sequence occupies residues 1–44; sequence MKKRIDYLSNKQNKYSIRRFTVGTTSVIVGATILFGIGNHQAQA. Residues 15 to 26 carry the YSIRK-G/S signaling motif motif; that stretch reads YSIRRFTVGTTS. Composition is skewed to polar residues over residues 44–61 and 68–95; these read ASEQ…NASA and MIET…NVDS. The interval 44–192 is disordered; it reads ASEQSNDTTQ…QGTSKPSVRT (149 aa). The segment at 45 to 542 is ligand binding A region; the sequence is SEQSNDTTQS…GSADGDSAVN (498 aa). The span at 96–119 shows a compositional bias: low complexity; it reads TTKPMSTQTSNTTTTEPASTNETP. Residues 120–189 are compositionally biased toward polar residues; the sequence is QPTAIKNQAT…SNAQGTSKPS (70 aa). Residues 272 to 276 carry the MIDAS-like motif motif; sequence DYSNS. Residues 530–885 are disordered; it reads YGGGSADGDS…ETGDKSENTN (356 aa). The segment covering 545–555 has biased composition (pro residues); that stretch reads DPTPGPPVDPE. Over residues 556–837 the composition is skewed to acidic residues; that stretch reads PSPDPEPEPT…SDSDSDSDSD (282 aa). Over residues 841–852 the composition is skewed to polar residues; that stretch reads RVTPPNNEQKAP. Basic and acidic residues predominate over residues 869–882; that stretch reads HKTDALPETGDKSE. The short motif at 874-878 is the LPXTG sorting signal element; sequence LPETG. The residue at position 877 (T877) is a Pentaglycyl murein peptidoglycan amidated threonine. A propeptide spans 878 to 913 (removed by sortase); the sequence is GDKSENTNATLFGAMMALLGSLLLFRKRKQDHKEKA.

It belongs to the serine-aspartate repeat-containing protein (SDr) family. Proteolytically cleaved by aureolysin (aur). This cleavage leads to the inactivation of ClfB.

Its subcellular location is the secreted. It localises to the cell wall. In terms of biological role, cell surface-associated protein implicated in virulence by promoting bacterial attachment to both alpha- and beta-chains of human fibrinogen and inducing the formation of bacterial clumps. The chain is Clumping factor B (clfB) from Staphylococcus aureus (strain COL).